Reading from the N-terminus, the 407-residue chain is Probable acyl-CoA dehydrogenase FadE2 (407 aa).

This sequence belongs to the acyl-CoA dehydrogenase family. FAD serves as cofactor.

The catalysed reaction is a 2,3-saturated acyl-CoA + A = a 2,3-dehydroacyl-CoA + AH2. The chain is Probable acyl-CoA dehydrogenase FadE2 from Mycobacterium tuberculosis (strain ATCC 25618 / H37Rv).